The primary structure comprises 72 residues: Phaiodotoxin-2 (72 aa).

The 72-residue stretch at 1 to 72 folds into the LCN-type CS-alpha/beta domain; the sequence is KFIRHKDESF…CFGALESKCA (72 aa). 4 cysteine pairs are disulfide-bonded: Cys13-Cys38, Cys23-Cys50, Cys27-Cys52, and Cys63-Cys71.

This sequence belongs to the long (4 C-C) scorpion toxin superfamily. Sodium channel inhibitor family. As to expression, expressed by the venom gland.

It is found in the secreted. In terms of biological role, sodium channel (Nav) specific neurotoxin. This Anuroctonus phaiodactylus (Mafia scorpion) protein is Phaiodotoxin-2.